Reading from the N-terminus, the 96-residue chain is MKLKIVAVVVTGLLAANVAHAAEVYNKDGNKLDLYGKVTALRYFTDDKRDDGDKTYARLGFKGETQINDQMIGFGHWEYDFKGYNDEANGSRGKNL.

A signal peptide spans 1–21 (MKLKIVAVVVTGLLAANVAHA).

This Escherichia coli (strain K12) protein is Protein YddL (yddL).